The sequence spans 118 residues: Small ribosomal subunit protein uS13 (118 aa).

A disordered region spans residues 99 to 118 (GQRTRTNARTRKGPRKAIKK).

Belongs to the universal ribosomal protein uS13 family. Part of the 30S ribosomal subunit. Forms a loose heterodimer with protein S19. Forms two bridges to the 50S subunit in the 70S ribosome.

Its function is as follows. Located at the top of the head of the 30S subunit, it contacts several helices of the 16S rRNA. In the 70S ribosome it contacts the 23S rRNA (bridge B1a) and protein L5 of the 50S subunit (bridge B1b), connecting the 2 subunits; these bridges are implicated in subunit movement. Contacts the tRNAs in the A and P-sites. The chain is Small ribosomal subunit protein uS13 from Xylella fastidiosa (strain M12).